The chain runs to 201 residues: Probable DNA replication complex GINS protein PSF1 (201 aa).

It belongs to the GINS1/PSF1 family. As to quaternary structure, component of the GINS complex which is a heterotetramer of gins1, gins2, gins3 and gins4.

It localises to the nucleus. Its function is as follows. The GINS complex plays an essential role in the initiation of DNA replication. The polypeptide is Probable DNA replication complex GINS protein PSF1 (Caenorhabditis briggsae).